Consider the following 750-residue polypeptide: Serine/threonine-protein kinase GE16371 (750 aa).

Doublecortin domains are found at residues 159-245 and 315-398; these read LRIK…VEYN and RIVT…AEDF. In terms of domain architecture, Protein kinase spans 479 to 737; the sequence is YTLGKIIGDG…SEDILDHYWT (259 aa). ATP contacts are provided by residues 485–493 and lysine 508; that span reads IGDGNFAIV. Aspartate 600 functions as the Proton acceptor in the catalytic mechanism.

This sequence belongs to the protein kinase superfamily. CAMK Ser/Thr protein kinase family. CaMK subfamily.

The catalysed reaction is L-seryl-[protein] + ATP = O-phospho-L-seryl-[protein] + ADP + H(+). It catalyses the reaction L-threonyl-[protein] + ATP = O-phospho-L-threonyl-[protein] + ADP + H(+). The protein is Serine/threonine-protein kinase GE16371 of Drosophila yakuba (Fruit fly).